The chain runs to 528 residues: Sulfhydryl oxidase 1 (528 aa).

The first 19 residues, 1-19 (MSLIHLFLLLGLLSLEAAA), serve as a signal peptide directing secretion. A Thioredoxin domain is found at 35-170 (NVADQKDNAI…LLNWINKQIG (136 aa)). N-linked (GlcNAc...) asparagine glycosylation occurs at N47. Active-site nucleophile residues include C72 and C75. Residues C72 and C75 are joined by a disulfide bond. Residues N186 and N297 are each glycosylated (N-linked (GlcNAc...) asparagine). A disulfide bond links C292 and C304. The region spanning 295–397 (SKNETRGFSC…GDPKFPKMIW (103 aa)) is the ERV/ALR sulfhydryl oxidase domain. FAD is bound by residues R300, W307, H311, D341, H345, 368 to 375 (WSTHNKVN), K394, and W397. C339 and C342 are disulfide-bonded. A disulfide bridge connects residues C403 and C406.

It depends on FAD as a cofactor. Highly expressed in roots.

The protein resides in the secreted. The protein localises to the cell wall. The enzyme catalyses 2 R'C(R)SH + O2 = R'C(R)S-S(R)CR' + H2O2. Functionally, sulfhydryl oxidase involved in the regulation of cation homeostasis. Positively regulates shoot accumulation of K(+) and inhibits accumulation of toxic cations. Acts at the level of root K(+) efflux systems involved in xylem loading (root symplast-xylem interface). The polypeptide is Sulfhydryl oxidase 1 (QSOX1) (Arabidopsis thaliana (Mouse-ear cress)).